A 439-amino-acid chain; its full sequence is MNLTPKEIVKFLDDYVIGQKKAKKIIAIALRNRYRRMQLSPELQDDIVPKNILMIGSTGVGKTEIARRLAKMMGFPFIKIEASKYTEVGFVGRDVESMVRDLANAALNLVKNEQREKNKDKIDEFIENKILEKLLPPLPKGISDEKQEEYKNSLEKMRTKLRNGNLDESTIEIEISQNMFDTNPNLPPEMGAMQDIVKVIGVGSKKVKKEMKIKDAKNALKNEAGEKILDQESIKSEALKRAENEGIIFIDEIDKIAVSSGNSNRQDPSKEGVQRDLLPIVEGSNVQTKIGTLKTDHILFIAAGAFHLSKPSDLIPELQGRFPLRVELDSLDDKALYEILTRPKNSLLKQYSQLLKTENLELEFNDEAIKEIAKIASRANEEMQDIGARRLHTVIEKLLEDLSFEADEYAGKKFVVDKKMVEEKLGDIIENKDLARYIL.

Residues Ile17, 59-64, Asp251, Glu317, and Arg389 contribute to the ATP site; that span reads GVGKTE.

This sequence belongs to the ClpX chaperone family. HslU subfamily. A double ring-shaped homohexamer of HslV is capped on each side by a ring-shaped HslU homohexamer. The assembly of the HslU/HslV complex is dependent on binding of ATP.

It localises to the cytoplasm. Functionally, ATPase subunit of a proteasome-like degradation complex; this subunit has chaperone activity. The binding of ATP and its subsequent hydrolysis by HslU are essential for unfolding of protein substrates subsequently hydrolyzed by HslV. HslU recognizes the N-terminal part of its protein substrates and unfolds these before they are guided to HslV for hydrolysis. In Campylobacter jejuni (strain RM1221), this protein is ATP-dependent protease ATPase subunit HslU.